The chain runs to 438 residues: Battenin (438 aa).

Residues 1-25 form a disordered region; sequence MGGCAGSRRRLSDSEGEETVPEPRL. Over 1-37 the chain is Cytoplasmic; the sequence is MGGCAGSRRRLSDSEGEETVPEPRLPLLDHQGAHWKN. S12 and S14 each carry phosphoserine. The helical transmembrane segment at 38–58 threads the bilayer; the sequence is AVGFWLLGLCNNFSYVVMLSA. Residues 59 to 127 lie on the Lumenal side of the membrane; that stretch reads AHDILSHERT…GLHLLPYSPR (69 aa). N-linked (GlcNAc...) asparagine glycans are attached at residues N71 and N85. A helical membrane pass occupies residues 128–148; the sequence is VLVSGICAAGSFVLVAFSHSV. Residues 149 to 151 are Cytoplasmic-facing; sequence GTS. A helical membrane pass occupies residues 152-172; it reads LCGVVLASISSGLGEVTFLSL. The Lumenal portion of the chain corresponds to 173–182; that stretch reads TAFYPRAVIS. A helical membrane pass occupies residues 183–203; that stretch reads WWSSGTGGAGLLGALSYLGLT. Residues 204–277 are Cytoplasmic-facing; it reads QAGLSPQQTL…SLSLRERWTV (74 aa). Residues 237-268 form a disordered region; it reads QDPGGEEEAESSARQPLIRTEAPESKPGSSSS. The Lysosomal targeting motif motif lies at 242–244; it reads EEE. The Lysosomal targeting motif. Required for AP1G1, AP2A2 and AP3D1 interaction motif lies at 253 to 254; the sequence is LI. Residues 278-298 traverse the membrane as a helical segment; the sequence is FKGLLWYIVPLVVVYFAEYFI. Residues 299 to 346 lie on the Lumenal side of the membrane; it reads NQGLFELLFFRNTSLSHAQQYRWYQMLYQAGVFASRSSLRCCHIRFTW. N310 carries an N-linked (GlcNAc...) asparagine glycan. The chain crosses the membrane as a helical span at residues 347-367; it reads ALALLQCLNLAFLLADVWFGF. The Cytoplasmic portion of the chain corresponds to 368–438; that stretch reads LLSIYFVFLI…PLHDFLCQLS (71 aa). Positions 409 to 419 match the Lysosomal targeting motif motif; the sequence is MATTCISDTLG. Cysteine methyl ester is present on C435. A lipid anchor (S-farnesyl cysteine) is attached at C435. A propeptide spans 436 to 438 (removed in mature form); the sequence is QLS.

The protein belongs to the battenin family. Interacts with DCTN1, KIF3A, RAB7A and RILP. Interacts with CLN5. Post-translationally, highly glycosylated. Farnesylation is important for trafficking to lysosomes.

The protein localises to the lysosome membrane. The protein resides in the late endosome. It is found in the lysosome. Mediates microtubule-dependent, anterograde transport connecting the Golgi network, endosomes, autophagosomes, lysosomes and plasma membrane, and participates in several cellular processes such as regulation of lysosomal pH, lysosome protein degradation, receptor-mediated endocytosis, autophagy, transport of proteins and lipids from the TGN, apoptosis and synaptic transmission. Facilitates the proteins transport from trans-Golgi network (TGN)-to other membrane compartments such as transport of microdomain-associated proteins to the plasma membrane, IGF2R transport to the lysosome where it regulates the CTSD release leading to regulation of CTSD maturation and thereby APP intracellular processing. Moreover regulates CTSD activity in response to osmotic stress. Also binds galactosylceramide and transports it from the trans Golgi to the rafts, which may have immediate and downstream effects on cell survival by modulating ceramide synthesis. At the plasma membrane, regulates actin-dependent events including filopodia formation, cell migration, and pinocytosis through ARF1-CDC42 pathway and also the cytoskeleton organization through interaction with MYH10 and fodrin leading to the regulation of the plasma membrane association of Na+, K+ ATPase complex. Regulates synaptic transmission in the amygdala, hippocampus, and cerebellum through regulation of synaptic vesicles density and their proximity to active zones leading to modulation of short-term plasticity and age-dependent anxious behavior, learning and memory. Regulates autophagic vacuoles (AVs) maturation by modulating the trafficking between endocytic and autophagolysosomal/lysosomal compartments, which involves vesicle fusion leading to regulation of degradation process. Also participates in cellular homeostasis of compounds such as, water, ions, amino acids, proteins and lipids in several tissue namely in brain and kidney through regulation of their transport and synthesis. The protein is Battenin of Macaca fascicularis (Crab-eating macaque).